The sequence spans 351 residues: Caveolin-2 (351 aa).

A compositionally biased stretch (polar residues) spans 1 to 14 (MTRQNTSESDNTQR). Disordered regions lie at residues 1-55 (MTRQ…QGIA), 71-93 (HRTS…YDNL), and 144-193 (QKGS…PEME). Residues 1–261 (MTRQNTSESD…FEIVRIYSYK (261 aa)) are Cytoplasmic-facing. Residues 22–31 (TVDDIDELTD) show a composition bias toward acidic residues. Basic residues predominate over residues 38-51 (HHHHHHHHEHHHQH). The span at 167–184 (PAQQSAPPTQQSRPQTTS) shows a compositional bias: low complexity. An intramembrane region (helical) is located at residues 262–290 (ILTLIFGLIIAFLGGILFALFAFLNIWIF). The Cytoplasmic portion of the chain corresponds to 291-351 (RPILILTRMA…EVWEKHIHHV (61 aa)).

This sequence belongs to the caveolin family. Homooligomer. As to expression, expressed in intracellular bodies in intestinal cells.

The protein localises to the golgi apparatus membrane. The protein resides in the cell membrane. It is found in the membrane. Its subcellular location is the caveola. It localises to the apical cell membrane. In terms of biological role, may act as a scaffolding protein within caveolar membranes. Interacts directly with G-protein alpha subunits and can regulate their activity. Thought to have a role in the uptake of lipids and proteins in the intestinal cells; operates in the apical uptake of lipid markers and trafficking of yolk proteins. Affects fecundity and egg laying. This is Caveolin-2 (cav-2) from Caenorhabditis elegans.